Reading from the N-terminus, the 187-residue chain is Protein GrpE (187 aa).

Positions 1–30 are disordered; that stretch reads MEKKETKNETEKTNKQDNKNTKSQKKENLN.

The protein belongs to the GrpE family. In terms of assembly, homodimer.

It is found in the cytoplasm. In terms of biological role, participates actively in the response to hyperosmotic and heat shock by preventing the aggregation of stress-denatured proteins, in association with DnaK and GrpE. It is the nucleotide exchange factor for DnaK and may function as a thermosensor. Unfolded proteins bind initially to DnaJ; upon interaction with the DnaJ-bound protein, DnaK hydrolyzes its bound ATP, resulting in the formation of a stable complex. GrpE releases ADP from DnaK; ATP binding to DnaK triggers the release of the substrate protein, thus completing the reaction cycle. Several rounds of ATP-dependent interactions between DnaJ, DnaK and GrpE are required for fully efficient folding. The chain is Protein GrpE from Borreliella afzelii (strain PKo) (Borrelia afzelii).